A 103-amino-acid polypeptide reads, in one-letter code: uncharacterized protein (103 aa).

The tract at residues 1–103 (MAGARRRARC…WRGGSCTSQR (103 aa)) is disordered. Basic residues-rich tracts occupy residues 55–65 (RRPGPGRRARS) and 74–84 (RPPHSRTRARR).

It belongs to the epstein-barr virus RPMS1 family.

This is an uncharacterized protein from Epstein-Barr virus (strain GD1) (HHV-4).